Consider the following 496-residue polypeptide: ADP-dependent glucokinase (496 aa).

A signal peptide spans 1–22; it reads MALWRGSACAGFLALAVGCVFL. Positions 52–496 constitute an ADPK domain; it reads SPESRLAAAW…GLFYSEARPD (445 aa). Residues E297, E328, and D481 each coordinate Mg(2+). D481 functions as the Proton acceptor in the catalytic mechanism.

The protein belongs to the ADP-dependent glucokinase family. Monomer. The cofactor is Mg(2+).

It localises to the secreted. The enzyme catalyses D-glucose + ADP = D-glucose 6-phosphate + AMP + H(+). Its pathway is carbohydrate degradation; glycolysis. In terms of biological role, catalyzes the phosphorylation of D-glucose to D-glucose 6-phosphate using ADP as the phosphate donor. GDP and CDP can replace ADP, but with reduced efficiency. The protein is ADP-dependent glucokinase (Adpgk) of Mus musculus (Mouse).